A 79-amino-acid polypeptide reads, in one-letter code: U-actitoxin-Bgr3d (79 aa).

Residues 1–21 (MSYERLLCLVLVASFIAASVA) form the signal peptide. Positions 22 to 38 (QHPGDAPRMEDDSSAIQ) are excised as a propeptide. Disulfide bonds link Cys-44/Cys-76, Cys-46/Cys-69, and Cys-59/Cys-77.

It belongs to the sea anemone type 3 (BDS) potassium channel toxin family.

It localises to the secreted. The protein localises to the nematocyst. In terms of biological role, potently and selectively inhibits voltage-gated potassium channels Kv11/KCNH/ERG. Acts as a gating-modifier toxin that shifts the voltage-dependence of ERG activation in the positive direction and suppresses its current amplitudes elicited by strong depolarizing pulses that maximally activate the channels. This is U-actitoxin-Bgr3d from Bunodosoma granuliferum (Red warty sea anemone).